A 245-amino-acid polypeptide reads, in one-letter code: MWQFPALLFLFLPGCCTAQDPVTGPEEVSGQEQGSLTVQCRYDSGWKDYKKYWCRGAYWKSCEILVETDASEQLVKENRVSIRDDQTDFIFTVTMEDLRMSDADIYWCGITKAGTDPMFKVNVNIDPEISTTIMTTTATVLPSTVLTSTVLTSTVLTPTTPTTESIGTENIGQVTQNSLFIWSLLSSISFLLMVFVVVPLLLSMLSAVLWVNRPQRHYGGGEIGLVETHRSDALDGEKHFPGDEK.

The signal sequence occupies residues Met-1 to Ala-18. The 106-residue stretch at Gln-19–Asn-124 folds into the Ig-like V-type domain. Topologically, residues Gln-19–Ser-189 are extracellular. Cys-40 and Cys-108 form a disulfide bridge. Important for maintaining surface expression and for interaction with FCER1G regions lie at residues Asn-177–Trp-182 and Ser-189–Val-198. Residues Phe-190–Trp-210 form a helical membrane-spanning segment. The Cytoplasmic portion of the chain corresponds to Val-211 to Lys-245.

Belongs to the CD300 family. As to quaternary structure, interacts with FCER1G; the interaction may be indirect. Interacts with TLR9. Highly expressed in bone marrow-derived mast cells and macrophages, peripheral blood monocytes and CD11c+ cells, with weaker expression detected in CD11b cells in bone marrow and peripheral blood. Not detected in B220+ cells in bone marrow or spleen, in Thy-1.2+ or CD3+ cells in peripheral blood, spleen or thymus, or in NK1.1+ cells in spleen (at protein level). Widely expressed in various tissues including heart, liver, spleen, lung, kidney, brain, bone marrow, thymus, axillary lymph node and mesenteric lymph node. Highly expressed in macrophage cell lines J774.1 and RAW 264.7 and in mast cell line MC/9. Weak expression detected in B-lineage cell lines WEHI-231 and A20 and in dendritic cell line DC2.4. Not detected in other myeloid cell lines or T-lineage cell lines.

It localises to the cell membrane. The protein localises to the early endosome. It is found in the lysosome. Functionally, acts as an activating receptor inducing cytokine production in mast cells. Can act as a positive regulator of TLR9 signaling in macrophages, leading to enhanced production of pro-inflammatory cytokines. The protein is CMRF35-like molecule 3 of Mus musculus (Mouse).